The chain runs to 228 residues: UPF0758 protein Gura_4138 (228 aa).

Positions 106-228 constitute an MPN domain; sequence RFTSPSQVFE…FLSFVDRGMM (123 aa). Zn(2+) is bound by residues His177, His179, and Asp190. The JAMM motif signature appears at 177–190; sequence HNHPTGDPTPSRED.

It belongs to the UPF0758 family.

This is UPF0758 protein Gura_4138 from Geotalea uraniireducens (strain Rf4) (Geobacter uraniireducens).